Here is a 400-residue protein sequence, read N- to C-terminus: Zinc finger protein 514 (400 aa).

Residues Met-1–Ser-72 form the KRAB domain. 7 C2H2-type zinc fingers span residues Cys-204 to His-226, Tyr-232 to His-254, Tyr-260 to His-282, Tyr-288 to His-310, Tyr-316 to His-338, Tyr-344 to His-366, and Tyr-372 to His-394.

Belongs to the krueppel C2H2-type zinc-finger protein family.

Its subcellular location is the nucleus. May be involved in transcriptional regulation. This chain is Zinc finger protein 514 (ZNF514), found in Homo sapiens (Human).